A 158-amino-acid polypeptide reads, in one-letter code: C-type lectin BiL (158 aa).

Positions 1-23 (MGRFIFVSFGLLVVFLSLSGAKG) are cleaved as a signal peptide. 4 disulfide bridges follow: cysteine 26–cysteine 37, cysteine 54–cysteine 154, cysteine 61–cysteine 156, and cysteine 129–cysteine 146. The region spanning 33–155 (MNGLCYKIFD…CESKNAFLCQ (123 aa)) is the C-type lectin domain. 5 residues coordinate Ca(2+): glutamine 119, aspartate 121, glutamate 127, asparagine 142, and aspartate 143. The Galactose-binding signature appears at 119-121 (QPD).

As to quaternary structure, homodimer; disulfide-linked. As to expression, expressed by the venom gland.

The protein localises to the secreted. In terms of biological role, lectin with a hemagglutinating activity that is inhibited by galactose, lactose and EDTA. Is calcium-dependent. Shows effects on the renal function of isolated perfused rat kidneys by increasing both perfusion pressure (PP) and renal vascular resistance (RVR). In addition, the urinary flow and glomerular filtration rate (GFR) decreases significantly. The changes observed may reflect direct injury to the glomerular and tubular renal cells, and the rise in permeability in the glomerular endothelial cells, may be the effect of interactions of C-type lectin with endothelial cells or due to release of other mediators by mesangial, tubular and endothelial cells. This is C-type lectin BiL from Bothrops insularis (Golden lancehead).